A 369-amino-acid polypeptide reads, in one-letter code: Anthranilate phosphoribosyltransferase (369 aa).

5-phospho-alpha-D-ribose 1-diphosphate-binding positions include Gly99, 102–103 (GD), 109–112 (NVST), 127–135 (KHGNRGVSS), and Ser139. Gly99 is a binding site for anthranilate. Ser111 is a Mg(2+) binding site. Residue Asn130 coordinates anthranilate. Arg185 serves as a coordination point for anthranilate. Mg(2+) is bound by residues Asp244 and Glu245.

This sequence belongs to the anthranilate phosphoribosyltransferase family. Homodimer. It depends on Mg(2+) as a cofactor.

It catalyses the reaction N-(5-phospho-beta-D-ribosyl)anthranilate + diphosphate = 5-phospho-alpha-D-ribose 1-diphosphate + anthranilate. The protein operates within amino-acid biosynthesis; L-tryptophan biosynthesis; L-tryptophan from chorismate: step 2/5. Functionally, catalyzes the transfer of the phosphoribosyl group of 5-phosphorylribose-1-pyrophosphate (PRPP) to anthranilate to yield N-(5'-phosphoribosyl)-anthranilate (PRA). This is Anthranilate phosphoribosyltransferase from Psychrobacter sp. (strain PRwf-1).